A 333-amino-acid polypeptide reads, in one-letter code: Cap-specific mRNA (nucleoside-2'-O-)-methyltransferase (333 aa).

Tyr-22 contributes to the mRNA binding site. Residues Gln-39, Tyr-66, Gly-68, Gly-72, Asp-95, Arg-97, Val-116, and Asp-138 each coordinate S-adenosyl-L-methionine. Residues 169-249 form a binding to NPH-I region; sequence PVASSLKWRC…NKIVRNKVVI (81 aa). Residue Lys-175 is the For methyltransferase activity of the active site. Residues 177–180, Asp-182, 205–207, and Glu-233 each bind mRNA; these read RCPF and SAE. Basic and acidic residues predominate over residues 305 to 320; the sequence is SHEPIQRKISSKDSMS. Positions 305–333 are disordered; the sequence is SHEPIQRKISSKDSMSKNRNSKRSVRGNK. Residues 323 to 333 show a composition bias toward basic residues; that stretch reads RNSKRSVRGNK.

The protein belongs to the class I-like SAM-binding methyltransferase superfamily. Poxvirus/kinetoplastid 2'-O-MTase family. Interacts with poly(A) polymerase catalytic subunit OPG063. Interacts with OPG109 and OPG123; these interactions might help linking transcription to capping and polyadenylation.

The protein localises to the virion. The catalysed reaction is a 5'-end (N(7)-methyl 5'-triphosphoguanosine)-ribonucleoside in mRNA + S-adenosyl-L-methionine = a 5'-end (N(7)-methyl 5'-triphosphoguanosine)-(2'-O-methyl-ribonucleoside) in mRNA + S-adenosyl-L-homocysteine + H(+). In terms of biological role, displays methyltransferase, positive regulation of the poly(A) polymerase and transcription elongation activities. Involved in the modification of both mRNA ends and in intermediate and late gene positive transcription elongation. At the mRNAs 5' end, methylates the ribose 2' OH group of the first transcribed nucleotide, thereby producing a 2'-O-methylpurine cap. At the 3' end, functions as a processivity factor which stimulates the activity of the viral poly(A) polymerase OPG063 that creates mRNA's poly(A) tail. In the presence of OPG102, OPG063 does not dissociate from the RNA allowing tail elongation to around 250 adenylates. The sequence is that of Cap-specific mRNA (nucleoside-2'-O-)-methyltransferase (OPG102) from Cynomys gunnisoni (Gunnison's prairie dog).